The sequence spans 124 residues: MKFQFVTALALASTMAVAAPINDQQEVLGAVAATRSKREGGSTGAELQDNNQPTAGLFGDGNSFGNQGLGGFLAATVDSLTKTIASPIKGILAPGGGSGGNGGSGGSGAAGGVGNLFSGILGGL.

Positions 1-18 are cleaved as a signal peptide; that stretch reads MKFQFVTALALASTMAVA. The interval 38 to 59 is disordered; sequence REGGSTGAELQDNNQPTAGLFG. S107 is lipidated: GPI-anchor amidated serine. Positions 108 to 124 are cleaved as a propeptide — removed in mature form; the sequence is GAAGGVGNLFSGILGGL.

It is found in the cell membrane. This is Predicted GPI-anchored protein 11 (PGA11) from Candida albicans (strain SC5314 / ATCC MYA-2876) (Yeast).